Reading from the N-terminus, the 70-residue chain is Protein SlyX homolog (70 aa).

This sequence belongs to the SlyX family.

This chain is Protein SlyX homolog, found in Shewanella loihica (strain ATCC BAA-1088 / PV-4).